Reading from the N-terminus, the 244-residue chain is Glutathione S-transferase theta-2 (244 aa).

A GST N-terminal domain is found at 2–82 (GLELFLDLVS…YLSCKYQTPD (81 aa)). Residues 40–41 (HK), 53–54 (KL), 66–67 (ES), and 104–107 (DCIR) each bind glutathione. In terms of domain architecture, GST C-terminal spans 88–224 (DLQARARVHE…SILEQAAKKT (137 aa)).

The protein belongs to the GST superfamily. Theta family. In terms of assembly, homodimer. As to expression, expressed at low levels in liver. In lung, expressed at low levels in ciliated bronchiolar cells, alveolar macrophages and alveolar type II cells.

Its subcellular location is the cytoplasm. The protein resides in the cytosol. It is found in the nucleus. It carries out the reaction RX + glutathione = an S-substituted glutathione + a halide anion + H(+). Functionally, conjugation of reduced glutathione to a wide number of exogenous and endogenous hydrophobic electrophiles. Has a sulfatase activity. This chain is Glutathione S-transferase theta-2 (GSTT2), found in Homo sapiens (Human).